We begin with the raw amino-acid sequence, 352 residues long: Anthranilate phosphoribosyltransferase (352 aa).

Residues Gly-83, 86 to 87, Thr-91, 93 to 96, 111 to 119, and Ala-123 each bind 5-phospho-alpha-D-ribose 1-diphosphate; these read GD, NIST, and KHGGRSVSS. Anthranilate is bound at residue Gly-83. Mg(2+) is bound at residue Ser-95. Arg-169 lines the anthranilate pocket. Mg(2+)-binding residues include Asp-228 and Glu-229.

The protein belongs to the anthranilate phosphoribosyltransferase family. Homodimer. The cofactor is Mg(2+).

The enzyme catalyses N-(5-phospho-beta-D-ribosyl)anthranilate + diphosphate = 5-phospho-alpha-D-ribose 1-diphosphate + anthranilate. The protein operates within amino-acid biosynthesis; L-tryptophan biosynthesis; L-tryptophan from chorismate: step 2/5. Functionally, catalyzes the transfer of the phosphoribosyl group of 5-phosphorylribose-1-pyrophosphate (PRPP) to anthranilate to yield N-(5'-phosphoribosyl)-anthranilate (PRA). The sequence is that of Anthranilate phosphoribosyltransferase from Neisseria meningitidis serogroup C (strain 053442).